The chain runs to 334 residues: N-acetyl-gamma-glutamyl-phosphate reductase (334 aa).

Residue Cys-154 is part of the active site.

It belongs to the NAGSA dehydrogenase family. Type 1 subfamily.

Its subcellular location is the cytoplasm. It carries out the reaction N-acetyl-L-glutamate 5-semialdehyde + phosphate + NADP(+) = N-acetyl-L-glutamyl 5-phosphate + NADPH + H(+). It functions in the pathway amino-acid biosynthesis; L-arginine biosynthesis; N(2)-acetyl-L-ornithine from L-glutamate: step 3/4. Functionally, catalyzes the NADPH-dependent reduction of N-acetyl-5-glutamyl phosphate to yield N-acetyl-L-glutamate 5-semialdehyde. The polypeptide is N-acetyl-gamma-glutamyl-phosphate reductase (Pectobacterium carotovorum subsp. carotovorum (strain PC1)).